The sequence spans 525 residues: MLGRTLREVSAALKQGQVTPTELCKNCLSLIKKTKYLNAYITVSEEVALKQAEESEKRYKQGQSLGDLDGIPVAVKDNFSTTGIETTCASNMLKGYVPPYNATVVQKLLDQGALLMGKTNLDEFAMGSGSTDGVFGPVRNPWTYSKQYRERSRQDAGDDSHWLITGGSSGGSAAAVAAFTCFAALGSDTGGSTRNPAAHCGIVGFKPSYGLVSRHGLIPLVNSMDVPGILTRCVDDTAIVLGTLAGHDPKDSTTVRNPAQPASVPGGMDVSRLCIGIPKEYLVPELSSEVRSLWSQAADLFESEGAKVIEVSLPHTCYSIVCYHVLCTSEVASNMARFDGLQYGHRSGVDVSTEAMYAATRQEGFNDVVRGRILSGNFFLLKENYENYFVKAQKVRRLIVKDFVDVFESGVDVLLTPTTLTEAVPYLEFIKEDNRTRSAQDDIFTQAVNMAGLPAVSVPVALSNQGLPIGLQLIGRAFCDQQLLTVAKWFEKQVQFPVIQLQGLMDDGSLVLENGKLTSASLTQR.

Residues Lys76 and Ser168 each act as charge relay system in the active site. Ser192 serves as the catalytic Acyl-ester intermediate.

It belongs to the amidase family. GatA subfamily. As to quaternary structure, subunit of the heterotrimeric GatCAB amidotransferase (AdT) complex, composed of A (QRSL1), B (GATB) and C (GATC) subunits.

It localises to the mitochondrion. It carries out the reaction L-glutamyl-tRNA(Gln) + L-glutamine + ATP + H2O = L-glutaminyl-tRNA(Gln) + L-glutamate + ADP + phosphate + H(+). Allows the formation of correctly charged Gln-tRNA(Gln) through the transamidation of misacylated Glu-tRNA(Gln) in the mitochondria. The reaction takes place in the presence of glutamine and ATP through an activated gamma-phospho-Glu-tRNA(Gln). The polypeptide is Glutamyl-tRNA(Gln) amidotransferase subunit A, mitochondrial (Qrsl1) (Mus musculus (Mouse)).